The primary structure comprises 196 residues: Pyridoxal 5'-phosphate synthase subunit PdxT (196 aa).

L-glutamine is bound at residue Gly-47–Ser-49. Cys-79 (nucleophile) is an active-site residue. Residues Arg-106 and Ile-134–Arg-135 contribute to the L-glutamine site. Active-site charge relay system residues include His-170 and Glu-172.

Belongs to the glutaminase PdxT/SNO family. In the presence of PdxS, forms a dodecamer of heterodimers. Only shows activity in the heterodimer.

The catalysed reaction is aldehydo-D-ribose 5-phosphate + D-glyceraldehyde 3-phosphate + L-glutamine = pyridoxal 5'-phosphate + L-glutamate + phosphate + 3 H2O + H(+). It catalyses the reaction L-glutamine + H2O = L-glutamate + NH4(+). It participates in cofactor biosynthesis; pyridoxal 5'-phosphate biosynthesis. In terms of biological role, catalyzes the hydrolysis of glutamine to glutamate and ammonia as part of the biosynthesis of pyridoxal 5'-phosphate. The resulting ammonia molecule is channeled to the active site of PdxS. This is Pyridoxal 5'-phosphate synthase subunit PdxT from Bacillus mycoides (strain KBAB4) (Bacillus weihenstephanensis).